The following is a 173-amino-acid chain: Cytochrome c homolog (173 aa).

Topologically, residues 1 to 8 (MSGKELNK) are cytoplasmic. A helical; Signal-anchor membrane pass occupies residues 9–29 (IVAAILFASLIAMMVGFIANI). The Periplasmic portion of the chain corresponds to 30–173 (LYKPVLEPKH…LFLKTYVHDK (144 aa)). Positions 82, 85, 86, and 148 each coordinate heme c.

Belongs to the cytochrome c family. Binds 1 heme c group covalently per subunit.

The protein resides in the cell membrane. Its function is as follows. May be involved in electron transfer from bc1 complex to aa3. This is Cytochrome c homolog (cycM) from Rickettsia bellii (strain RML369-C).